The sequence spans 205 residues: Outer-membrane lipoprotein LolB (205 aa).

An N-terminal signal peptide occupies residues 1–17 (MRLRLFLAASALALLSG). Cys18 is lipidated: N-palmitoyl cysteine. Cys18 carries the S-diacylglycerol cysteine lipid modification.

It belongs to the LolB family. As to quaternary structure, monomer.

It localises to the cell outer membrane. Functionally, plays a critical role in the incorporation of lipoproteins in the outer membrane after they are released by the LolA protein. The polypeptide is Outer-membrane lipoprotein LolB (Pseudomonas aeruginosa (strain LESB58)).